The primary structure comprises 427 residues: Isocitrate dehydrogenase [NADP] (427 aa).

Residue T114 participates in NADP(+) binding. D-threo-isocitrate is bound by residues S123, N125, R129, R139, and R163. D317 is a binding site for Mg(2+). Residues 349 to 355, N362, Y401, and R405 each bind NADP(+); that span reads HGTAPKY.

It belongs to the isocitrate and isopropylmalate dehydrogenases family. Homodimer. It depends on Mg(2+) as a cofactor. Mn(2+) serves as cofactor.

The catalysed reaction is D-threo-isocitrate + NADP(+) = 2-oxoglutarate + CO2 + NADPH. In terms of biological role, catalyzes the oxidative decarboxylation of isocitrate to 2-oxoglutarate and carbon dioxide with the concomitant reduction of NADP(+). The polypeptide is Isocitrate dehydrogenase [NADP] (icd) (Coxiella burnetii (strain RSA 493 / Nine Mile phase I)).